Here is a 174-residue protein sequence, read N- to C-terminus: Peptidyl-prolyl cis-trans isomerase D, mitochondrial (174 aa).

Residues 10–173 enclose the PPIase cyclophilin-type domain; sequence FFQIKQGNTP…AACVIEDCGQ (164 aa).

Belongs to the cyclophilin-type PPIase family. PPIase D subfamily.

The protein resides in the mitochondrion. It carries out the reaction [protein]-peptidylproline (omega=180) = [protein]-peptidylproline (omega=0). Its activity is regulated as follows. Binds cyclosporin A (CsA). CsA mediates some of its effects via an inhibitory action on PPIase. Functionally, PPIases accelerate the folding of proteins. It catalyzes the cis-trans isomerization of proline imidic peptide bonds in oligopeptides. The protein is Peptidyl-prolyl cis-trans isomerase D, mitochondrial (cypD) of Dictyostelium discoideum (Social amoeba).